A 93-amino-acid chain; its full sequence is Small ribosomal subunit protein uS19 (93 aa).

The protein belongs to the universal ribosomal protein uS19 family.

Functionally, protein S19 forms a complex with S13 that binds strongly to the 16S ribosomal RNA. In Pediococcus pentosaceus (strain ATCC 25745 / CCUG 21536 / LMG 10740 / 183-1w), this protein is Small ribosomal subunit protein uS19.